The primary structure comprises 466 residues: Putative multidrug resistance protein MdtD (466 aa).

A run of 14 helical transmembrane segments spans residues 11–31 (LWIVAFGFFMQTLDTTIVNTA), 48–68 (SVIVSYVLTVAVMLPASGWLA), 71–91 (IGVKNIFFAAILLFTLGSLLC), 105–125 (VIQGIGGAMMVPVGRLTVMKI), 137–157 (FVTLPGQIGPLLGPALGGFLV), 164–184 (WIFLINLPVGIIGALATWFLM), 194–214 (FDISGFVWLAVGMATLTLALD), 218–238 (SLGIPPIAIFALIAIGLIALL), 262–282 (FSIGLTGGLLARIGSGMLPFM), 292–312 (GFSPFHAGLMMVPMVLGSMGI), 328–347 (VLVASTLLLALVTALFALVA), 351–370 (WIWMIPVVLFFLGTVNAIRF), 402–422 (SLGVSIAGILLGIFSQPHIAA), and 429–449 (TVFLYTYLSMVVIIALPALIF).

This sequence belongs to the major facilitator superfamily. TCR/Tet family.

It localises to the cell inner membrane. This chain is Putative multidrug resistance protein MdtD, found in Pectobacterium atrosepticum (strain SCRI 1043 / ATCC BAA-672) (Erwinia carotovora subsp. atroseptica).